Reading from the N-terminus, the 349-residue chain is Transmembrane protein 255A (349 aa).

4 helical membrane passes run 30 to 50, 57 to 77, 89 to 109, and 226 to 246; these read IYVT…GLAA, VTVG…LGII, LVAS…CAIV, and TILN…LGGF. The segment at 301–329 is disordered; it reads VFPSSPPSGLSDEPQSASPSPSYMWSSSA. Residues 316-329 show a composition bias toward low complexity; it reads SASPSPSYMWSSSA.

Belongs to the TMEM255 family.

It localises to the membrane. In Macaca fascicularis (Crab-eating macaque), this protein is Transmembrane protein 255A (TMEM255A).